We begin with the raw amino-acid sequence, 930 residues long: Pyruvate dehydrogenase E1 component (930 aa).

A compositionally biased stretch (basic and acidic residues) spans 1-10 (MTTDFARHDL). A disordered region spans residues 1-21 (MTTDFARHDLAQNSNSASEPD). Lysine 375 participates in a covalent cross-link: Isoglutamyl lysine isopeptide (Lys-Gln) (interchain with Q-Cter in protein Pup).

As to quaternary structure, homodimer. Part of the PDH complex, consisting of multiple copies of AceE (E1), DlaT (E2) and Lpd (E3). Mg(2+) is required as a cofactor. Requires thiamine diphosphate as cofactor.

The catalysed reaction is N(6)-[(R)-lipoyl]-L-lysyl-[protein] + pyruvate + H(+) = N(6)-[(R)-S(8)-acetyldihydrolipoyl]-L-lysyl-[protein] + CO2. Its function is as follows. Component of the pyruvate dehydrogenase (PDH) complex, that catalyzes the overall conversion of pyruvate to acetyl-CoA and CO(2). AceE has reductase activity with pyruvate but does not react with 2-oxoglutarate. The sequence is that of Pyruvate dehydrogenase E1 component (aceE) from Mycobacterium tuberculosis (strain ATCC 25618 / H37Rv).